Reading from the N-terminus, the 485-residue chain is tRNA-2-methylthio-N(6)-dimethylallyladenosine synthase (485 aa).

The MTTase N-terminal domain maps to 37-154 (GKLYIKTHGC…LPELIRARRE (118 aa)). [4Fe-4S] cluster contacts are provided by Cys-46, Cys-83, Cys-117, Cys-191, Cys-195, and Cys-198. Positions 177–416 (RADGPSAFVS…HINAHAAGIS (240 aa)) constitute a Radical SAM core domain. One can recognise a TRAM domain in the interval 417–480 (QRMVGSVQRV…SNSLRGRIQL (64 aa)).

It belongs to the methylthiotransferase family. MiaB subfamily. As to quaternary structure, monomer. It depends on [4Fe-4S] cluster as a cofactor.

The protein localises to the cytoplasm. The catalysed reaction is N(6)-dimethylallyladenosine(37) in tRNA + (sulfur carrier)-SH + AH2 + 2 S-adenosyl-L-methionine = 2-methylsulfanyl-N(6)-dimethylallyladenosine(37) in tRNA + (sulfur carrier)-H + 5'-deoxyadenosine + L-methionine + A + S-adenosyl-L-homocysteine + 2 H(+). In terms of biological role, catalyzes the methylthiolation of N6-(dimethylallyl)adenosine (i(6)A), leading to the formation of 2-methylthio-N6-(dimethylallyl)adenosine (ms(2)i(6)A) at position 37 in tRNAs that read codons beginning with uridine. The sequence is that of tRNA-2-methylthio-N(6)-dimethylallyladenosine synthase from Xanthomonas campestris pv. campestris (strain 8004).